A 79-amino-acid chain; its full sequence is Protein Vpu (79 aa).

Over 1–7 (MLLLIKL) the chain is Extracellular. Residues 8–28 (GFIGLAIETLIVIVVWAIVYR) form a helical membrane-spanning segment. At 29-79 (IYREVKVEEKISQLRQRIRDRAEDSGNESDGDAEELANLLPPDRIDQDNWV) the chain is on the cytoplasmic side. Residues 48–79 (DRAEDSGNESDGDAEELANLLPPDRIDQDNWV) are disordered. Phosphoserine; by host CK2 is present on residues Ser-53 and Ser-57. A compositionally biased stretch (acidic residues) spans 53–63 (SGNESDGDAEE).

Belongs to the HIV-1 VPU protein family. Homopentamer. Interacts with host CD4 and BRTC; these interactions induce proteasomal degradation of CD4. Interacts with host BST2; this interaction leads to the degradation of host BST2. Interacts with host FBXW11. Interacts with host AP1M1; this interaction plays a role in the mistrafficking and subsequent degradation of host BST2. Interacts with host RANBP2; this interaction allows Vpu to down-regulate host BLM sumoylation. Phosphorylated by host CK2. This phosphorylation is necessary for interaction with human BTRC and degradation of CD4.

Its subcellular location is the host membrane. Ion channel activity is inhibited by hexamethylene amiloride in vitro. Functionally, enhances virion budding by targeting host CD4 and Tetherin/BST2 to proteasome degradation. Degradation of CD4 prevents any unwanted premature interactions between viral Env and its host receptor CD4 in the endoplasmic reticulum. Degradation of antiretroviral protein Tetherin/BST2 is important for virion budding, as BST2 tethers new viral particles to the host cell membrane. Mechanistically, Vpu bridges either CD4 or BST2 to BTRC, a substrate recognition subunit of the Skp1/Cullin/F-box protein E3 ubiquitin ligase, induces their ubiquitination and subsequent proteasomal degradation. The alteration of the E3 ligase specificity by Vpu seems to promote the degradation of host IKBKB, leading to NF-kappa-B down-regulation and subsequent apoptosis. Acts as a viroporin that forms an oligomeric ion channel in membranes. Modulates the host DNA repair mechanisms to promote degradation of nuclear viral cDNA in cells that are already productively infected in order to suppress immune sensing and proviral hyper-integration (superinfection). Manipulates PML-NBs and modulates SUMOylation of host BLM protein thereby enhancing its DNA-end processing activity toward viral unintegrated linear DNA. Also inhibits RAD52-mediated homologous repair of viral cDNA, preventing the generation of dead-end circular forms of single copies of the long terminal repeat and permitting sustained nucleolytic attack. This is Protein Vpu from Pan troglodytes (Chimpanzee).